The sequence spans 157 residues: ATP synthase subunit delta (157 aa).

It belongs to the ATPase delta chain family. F-type ATPases have 2 components, F(1) - the catalytic core - and F(0) - the membrane proton channel. F(1) has five subunits: alpha(3), beta(3), gamma(1), delta(1), epsilon(1). F(0) has three main subunits: a(1), b(2) and c(10-14). The alpha and beta chains form an alternating ring which encloses part of the gamma chain. F(1) is attached to F(0) by a central stalk formed by the gamma and epsilon chains, while a peripheral stalk is formed by the delta and b chains.

It is found in the cell membrane. F(1)F(0) ATP synthase produces ATP from ADP in the presence of a proton or sodium gradient. F-type ATPases consist of two structural domains, F(1) containing the extramembraneous catalytic core and F(0) containing the membrane proton channel, linked together by a central stalk and a peripheral stalk. During catalysis, ATP synthesis in the catalytic domain of F(1) is coupled via a rotary mechanism of the central stalk subunits to proton translocation. Functionally, this protein is part of the stalk that links CF(0) to CF(1). It either transmits conformational changes from CF(0) to CF(1) or is implicated in proton conduction. The sequence is that of ATP synthase subunit delta from Chloroflexus aggregans (strain MD-66 / DSM 9485).